The following is a 96-amino-acid chain: Co-chaperonin GroES (96 aa).

This sequence belongs to the GroES chaperonin family. In terms of assembly, heptamer of 7 subunits arranged in a ring. Interacts with the chaperonin GroEL.

Its subcellular location is the cytoplasm. Its function is as follows. Together with the chaperonin GroEL, plays an essential role in assisting protein folding. The GroEL-GroES system forms a nano-cage that allows encapsulation of the non-native substrate proteins and provides a physical environment optimized to promote and accelerate protein folding. GroES binds to the apical surface of the GroEL ring, thereby capping the opening of the GroEL channel. This chain is Co-chaperonin GroES, found in Holospora obtusa.